Consider the following 227-residue polypeptide: PKHD-type hydroxylase Caul_0045 (227 aa).

Residues 78-178 form the Fe2OG dioxygenase domain; the sequence is TILSPLFNRY…RTASFFWIQS (101 aa). Fe cation is bound by residues H96, D98, and H159. Residue R169 coordinates 2-oxoglutarate.

The cofactor is Fe(2+). It depends on L-ascorbate as a cofactor.

In Caulobacter sp. (strain K31), this protein is PKHD-type hydroxylase Caul_0045.